The primary structure comprises 2472 residues: Spectrin alpha chain, non-erythrocytic 1 (2472 aa).

At Met-1 the chain carries N-acetylmethionine. Spectrin repeat units follow at residues 45 to 146, 150 to 251, 256 to 358, 361 to 465, 468 to 570, 574 to 676, 679 to 781, 785 to 888, and 891 to 961; these read RFQF…IKLL, KLVQ…QGKL, EVQR…ARLD, YRLQ…QYEQ, DLQL…AQLA, HLQQ…KLRE, QQQQ…QKLA, RLQQ…DLED, and QAQQ…QQVA. Ser-587 is subject to Phosphoserine. Lys-637 is subject to N6-acetyllysine. Lys-803 carries the post-translational modification N6-acetyllysine. Phosphoserine occurs at positions 924, 982, 999, 1029, 1031, and 1041. Positions 967-1026 constitute an SH3 domain; that stretch reads TGKELVLALYDYQEKSPREVTMKKGDILTLLNSTNKDWWKVEVNDRQGFVPAAYVKKLDP. A Spectrin 10 repeat occupies 1096-1166; sequence LFREANELQQ…LESEGLMAEE (71 aa). Tyr-1176 carries the phosphotyrosine modification. Phosphoserine is present on residues Ser-1190, Ser-1207, Ser-1217, Ser-1291, Ser-1306, Ser-1323, and Ser-1338. Residues 1233–1336 form a Spectrin 11 repeat; that stretch reads HEVQRFHRDA…RADQRKAKLG (104 aa). 2 Spectrin repeats span residues 1339 to 1441 and 1446 to 1549; these read HDLQ…RMML and ELQL…KLGE. Residue Lys-1519 is modified to N6-acetyllysine. Ser-1550, Ser-1557, Ser-1578, Ser-1615, and Ser-1647 each carry phosphoserine. Spectrin repeat units follow at residues 1552–1656, 1659–1762, 1764–1868, 1871–1974, 1978–2081, 2092–2194, and 2206–2310; these read TLQQ…KLKE, KQQN…KLSE, HRLH…RLEE, EYQQ…KLDE, FLQF…KLLE, LFLT…LELQ, and LRQE…NLEQ. Thr-2020 is modified (phosphothreonine). At Lys-2052 the chain carries N6-acetyllysine. Thr-2066 bears the Phosphothreonine mark. EF-hand domains are found at residues 2323–2358, 2366–2401, and 2404–2439; these read EALK…LGYD, EPDP…RETE, and KSSE…EQAD. Ca(2+)-binding residues include Asp-2336, Asp-2338, Ser-2340, Arg-2342, Glu-2347, Asp-2379, Asn-2381, Asp-2383, His-2385, and Glu-2390. Residue Lys-2421 is modified to N6-acetyllysine.

This sequence belongs to the spectrin family. In terms of assembly, like erythrocyte spectrin, the spectrin-like proteins are capable of forming dimers which can further associate to tetramers. Interacts (via C-terminal spectrin repeats) with TRPC4. Interacts with CALM and EMD. Interacts with isoform 1 of ACP1. Identified in a complex with ACTN4, CASK, IQGAP1, MAGI2, NPHS1 and SPTBN1. Interacts with SHANK3 (via ANK repeats). Interacts with CLN3; this interaction regulates the fodrin localization at the plasma membrane. Phosphorylation of Tyr-1176 decreases sensitivity to cleavage by calpain in vitro. As to expression, expressed in the foot process layer of podocytes in the kidney glomerulus and in tubules (at protein level).

It localises to the cytoplasm. Its subcellular location is the cytoskeleton. It is found in the cell cortex. Fodrin, which seems to be involved in secretion, interacts with calmodulin in a calcium-dependent manner and is thus candidate for the calcium-dependent movement of the cytoskeleton at the membrane. The chain is Spectrin alpha chain, non-erythrocytic 1 (Sptan1) from Rattus norvegicus (Rat).